The chain runs to 146 residues: Acidic phospholipase A2 2 (146 aa).

The first 21 residues, 1-21 (MNPAHLLILAAVCVSSLGASS), serve as a signal peptide directing secretion. Residues 22–27 (NRPMPL) constitute a propeptide that is removed on maturation. 7 disulfides stabilise this stretch: Cys-38-Cys-98, Cys-53-Cys-145, Cys-55-Cys-71, Cys-70-Cys-126, Cys-77-Cys-119, Cys-87-Cys-112, and Cys-105-Cys-117. Ca(2+) contacts are provided by Tyr-54, Gly-56, and Gly-58. The active site involves His-74. Asp-75 contacts Ca(2+). Residue Asp-120 is part of the active site.

This sequence belongs to the phospholipase A2 family. Group I subfamily. D49 sub-subfamily. It depends on Ca(2+) as a cofactor. Expressed by the venom gland.

The protein resides in the secreted. It carries out the reaction a 1,2-diacyl-sn-glycero-3-phosphocholine + H2O = a 1-acyl-sn-glycero-3-phosphocholine + a fatty acid + H(+). Its function is as follows. PLA2 catalyzes the calcium-dependent hydrolysis of the 2-acyl groups in 3-sn-phosphoglycerides. This Naja kaouthia (Monocled cobra) protein is Acidic phospholipase A2 2.